A 226-amino-acid chain; its full sequence is ATP-dependent dethiobiotin synthetase BioD (226 aa).

14 to 19 (GIGKTF) serves as a coordination point for ATP. Position 18 (Thr18) interacts with Mg(2+). Residue Lys39 is part of the active site. Ser43 is a substrate binding site. ATP-binding positions include Asp56, 117–120 (EGVG), 177–178 (NT), 206–208 (PHI), and Asn213. 2 residues coordinate Mg(2+): Asp56 and Glu117.

The protein belongs to the dethiobiotin synthetase family. In terms of assembly, homodimer. Mg(2+) is required as a cofactor.

It localises to the cytoplasm. It catalyses the reaction (7R,8S)-7,8-diammoniononanoate + CO2 + ATP = (4R,5S)-dethiobiotin + ADP + phosphate + 3 H(+). Its pathway is cofactor biosynthesis; biotin biosynthesis; biotin from 7,8-diaminononanoate: step 1/2. Functionally, catalyzes a mechanistically unusual reaction, the ATP-dependent insertion of CO2 between the N7 and N8 nitrogen atoms of 7,8-diaminopelargonic acid (DAPA, also called 7,8-diammoniononanoate) to form a ureido ring. This Xylella fastidiosa (strain 9a5c) protein is ATP-dependent dethiobiotin synthetase BioD.